Reading from the N-terminus, the 158-residue chain is Glycosyl-phosphatidylinositol-anchored molecule-like protein (158 aa).

Positions 1–17 (MLLFALLLAMELPLVAA) are cleaved as a signal peptide. The UPAR/Ly6 domain occupies 29-134 (LRCHDCAVIN…DEVTEEELPE (106 aa)). Disulfide bonds link Cys31/Cys55, Cys34/Cys42, Cys48/Cys73, Cys77/Cys104, and Cys105/Cys110.

The protein localises to the cell membrane. Functionally, may play a role in the apoptotic pathway or cell-cycle regulation induced by p53/TP53 after DNA damage. The protein is Glycosyl-phosphatidylinositol-anchored molecule-like protein (GML) of Homo sapiens (Human).